The chain runs to 1085 residues: SLIT-ROBO Rho GTPase-activating protein 1 (1085 aa).

The F-BAR domain occupies 19-314; sequence SQVKEIRAQL…AVDNLEPRSD (296 aa). Residues 351-390 adopt a coiled-coil conformation; the sequence is VQAELMLRYQQLQSRLATLKIENEEVKKTTEATLQTIQDM. The residue at position 416 (serine 416) is a Phosphoserine. The tract at residues 475–496 is disordered; sequence YMTTRPPNVPPKPQKHRKSRPR. The Rho-GAP domain occupies 506–694; that stretch reads GDLETFVKDS…TIIIHHETIF (189 aa). Positions 743-802 constitute an SH3 domain; it reads CEPIEAIAKFDYVGRSARELSFKKGASLLLYHRASEDWWEGRHNGIDGLVPHQYIVVQDM. Over residues 808–822 the composition is skewed to polar residues; it reads DTLSQKADSEASSGP. The segment at 808–954 is disordered; it reads DTLSQKADSE…TGFNDHKPLD (147 aa). 2 positions are modified to phosphoserine: serine 835 and serine 917. Over residues 922 to 931 the composition is skewed to basic and acidic residues; it reads SRHDSLKKID. Serine 932 is modified (phosphoserine). The span at 937-946 shows a compositional bias: polar residues; it reads RSTSSGQYTG. Residues 956-985 adopt a coiled-coil conformation; it reads ETIAQDIEETMNTALNELRELERQSTAKHA. Polar residues predominate over residues 997–1011; that stretch reads KNSPTPATSTESLSP. Disordered stretches follow at residues 997–1038 and 1051–1085; these read KNSP…MSTF and KPPA…SCTM. Serine 999 is modified (phosphoserine). A Phosphothreonine modification is found at threonine 1001. Residues 1027-1037 are compositionally biased toward low complexity; it reads STSSSSDTMST. Serine 1032 is subject to Phosphoserine.

Homodimer. Forms a heterooligomer with SRGAP2 and SRGAP3 through its F-BAR domain. Interacts with ROBO1, CDC42 and RHOA. Interacts with FASLG. In terms of tissue distribution, expressed in brain, lung, kidney, and testis.

Its function is as follows. GTPase-activating protein for RhoA and Cdc42 small GTPases. Together with CDC42 seems to be involved in the pathway mediating the repulsive signaling of Robo and Slit proteins in neuronal migration. SLIT2, probably through interaction with ROBO1, increases the interaction of SRGAP1 with ROBO1 and inactivates CDC42. In Homo sapiens (Human), this protein is SLIT-ROBO Rho GTPase-activating protein 1 (SRGAP1).